A 784-amino-acid polypeptide reads, in one-letter code: LPS-assembly protein LptD (784 aa).

Positions 1–24 are cleaved as a signal peptide; sequence MKKRIPTLLATMIATALYSQQGLA. 2 cysteine pairs are disulfide-bonded: Cys-31/Cys-724 and Cys-173/Cys-725.

Belongs to the LptD family. Component of the lipopolysaccharide transport and assembly complex. Interacts with LptE and LptA. Post-translationally, contains two intramolecular disulfide bonds.

The protein resides in the cell outer membrane. In terms of biological role, together with LptE, is involved in the assembly of lipopolysaccharide (LPS) at the surface of the outer membrane. This is LPS-assembly protein LptD from Escherichia coli O1:K1 / APEC.